A 192-amino-acid chain; its full sequence is Interferon (192 aa).

An N-terminal signal peptide occupies residues 1–30 (MAVPASPQHPRGYGILLLTLLMKALAAAAA). 3 disulfide bridges follow: Cys-31–Cys-128, Cys-60–Cys-154, and Cys-67–Cys-167. N-linked (GlcNAc...) asparagine glycans are attached at residues Asn-70 and Asn-77.

The protein belongs to the alpha/beta interferon family.

It is found in the secreted. Its function is as follows. Has antiviral activities. The sequence is that of Interferon from Meleagris gallopavo (Wild turkey).